We begin with the raw amino-acid sequence, 300 residues long: DNA repair protein PprA (300 aa).

The residue at position 88 (threonine 88) is a Phosphothreonine. The residue at position 128 (serine 128) is a Phosphoserine. Threonine 160 is subject to Phosphothreonine.

Post-translationally, phosphorylated by RqkA in vitro. Phosphorylated primarily at Thr-88, and to a little extent at Ser-128 and Thr-160.

Its activity is regulated as follows. Phosphorylation increases DNA binding affinity. DsDNA-binding protein that contributes to the ionizing radiation resistance of D.radiodurans. Plays a role in DNA repair and genome reconstitution, and is necessary for recovery from severe genomic fragmentation as a result of exposure to severe levels of ionizing radiation. In vitro, binds to double-stranded DNA carrying strand breaks and stimulates the DNA end-joining reaction catalyzed by DNA ligases. Thus, PprA plays a critical role in a non-homologous end-joining (NHEJ) pathway for the repair of radiation-induced DNA double-strands breaks. Cannot bind to dsDNA without strand breaks or single-stranded DNA. This chain is DNA repair protein PprA (pprA), found in Deinococcus radiodurans (strain ATCC 13939 / DSM 20539 / JCM 16871 / CCUG 27074 / LMG 4051 / NBRC 15346 / NCIMB 9279 / VKM B-1422 / R1).